The sequence spans 147 residues: Cytochrome c-type biogenesis protein CcmE (147 aa).

Residues 1-7 (MTRKQKR) lie on the Cytoplasmic side of the membrane. A helical; Signal-anchor for type II membrane protein transmembrane segment spans residues 8–28 (LSVIVGGLAFLGAATGLTFYA). Over 29 to 147 (LGQKASYFYM…KGVWQESKSE (119 aa)) the chain is Periplasmic. Heme is bound by residues His122 and Tyr126.

This sequence belongs to the CcmE/CycJ family.

It is found in the cell inner membrane. In terms of biological role, heme chaperone required for the biogenesis of c-type cytochromes. Transiently binds heme delivered by CcmC and transfers the heme to apo-cytochromes in a process facilitated by CcmF and CcmH. The polypeptide is Cytochrome c-type biogenesis protein CcmE (Mesorhizobium japonicum (strain LMG 29417 / CECT 9101 / MAFF 303099) (Mesorhizobium loti (strain MAFF 303099))).